A 513-amino-acid polypeptide reads, in one-letter code: U3 small nucleolar RNA-associated protein 15 (513 aa).

WD repeat units follow at residues 37 to 78 (KEHN…KTFS), 79 to 118 (RFKDVVYSASFRSDGKLLCAGDATGLVSVYDSYNPRTILL), 124 to 162 (THPTHVTKFHTQDNKILATASDDRVTRLWDISNAYEPQL), 166 to 206 (GATD…STPI), 210 to 247 (NHDQPVENVIAVSPTQIVSCGGNNFKVWDLTSNKKLYE), and 250 to 294 (NFNK…QVKF). Residues 332-354 (KKKEKRSSDKENAPASFNKNAKS) are disordered.

Interacts with snoRNA U3. Interacts with MPP10. Component of the ribosomal small subunit (SSU) processome composed of at least 40 protein subunits and snoRNA U3. In the absence of snoRNA3, forms a complex with other t-UTPs. This complex can associate with pre-18S ribosomal RNAs.

The protein localises to the nucleus. Its subcellular location is the nucleolus. Involved in nucleolar processing of pre-18S ribosomal RNA. Required for optimal pre-ribosomal RNA transcription by RNA polymerase I together with a subset of U3 proteins required for transcription (t-UTPs). The protein is U3 small nucleolar RNA-associated protein 15 (UTP15) of Saccharomyces cerevisiae (strain ATCC 204508 / S288c) (Baker's yeast).